We begin with the raw amino-acid sequence, 369 residues long: UPF0284 protein AM1_5137 (369 aa).

It belongs to the UPF0284 family.

The sequence is that of UPF0284 protein AM1_5137 from Acaryochloris marina (strain MBIC 11017).